The sequence spans 682 residues: E3 ubiquitin ligase Rnf157 (682 aa).

Residue G2 is the site of N-myristoyl glycine attachment. Residues 277–317 form an RING-type; degenerate zinc finger; it reads CVVCLSDVRDTLILPCRHCASCNVHCADTLRYQANNCPICR. Positions 330-333 match the D-box 1 motif; the sequence is RKKL. 2 disordered regions span residues 440–604 and 655–682; these read QNSS…VQED and NTQR…PLAV. The span at 479–538 shows a compositional bias: polar residues; sequence ESENLTLSSSGAVDQSSCTGTPLSSTISSPEDPASSSLAQSVMSMASSQISTDTVSSMSG. The span at 585 to 597 shows a compositional bias: acidic residues; the sequence is QDAEGNDIMEEED. Positions 658–661 match the D-box 2 motif; sequence RRRL. 3 positions are modified to phosphoserine: S662, S664, and S665.

Interacts with APBB1. Interacts with CHD1; CHD1-binding controls RNF157 stability. Also interacts with ATRN, MEGF8, TECR, MSI2, PLRG1, BYSL, MTERF3, PSMA1, MRPS18B, PRPF4, FASTKD2, SLC25A1, SMU1, CNOT9, MRPS2, MAGT1, FXR2, EMD, PSMD8, HDAC1, RAN, HSD17B12, TXNDC5 and MRPL19. As to expression, predominantly expressed in the brain.

Its subcellular location is the cytoplasm. The catalysed reaction is S-ubiquitinyl-[E2 ubiquitin-conjugating enzyme]-L-cysteine + [acceptor protein]-L-lysine = [E2 ubiquitin-conjugating enzyme]-L-cysteine + N(6)-ubiquitinyl-[acceptor protein]-L-lysine.. Its function is as follows. E3 ubiquitin ligase that ubiquitinates APBB1 for its degradation by the proteasome and thus prevents apoptosis and promotes survival of neurons. Has a dual role in neurons as it is also required for dendrite growth and maintenance for which its ligase activity is not critical. May act as a scaffold molecule to regulate this process. Acts as a downstream effector of the interconnected PI3K and MAPK signaling pathways and thus participates in the regulation of the cell cycle. This is E3 ubiquitin ligase Rnf157 (Rnf157) from Rattus norvegicus (Rat).